A 129-amino-acid polypeptide reads, in one-letter code: Nif-specific regulatory protein (129 aa).

A Sigma-54 factor interaction domain is found at 1–46 (EFLLTKIGRQQGRPLTVTDSAIRLLMSHRWPGNVRDVENCLERSAI). The segment at residues 101–129 (QAKAARLLGMTPRQIAYRIQTLNIHMRKI) is a DNA-binding region (H-T-H motif).

Interacts with sigma-54.

In terms of biological role, required for activation of most nif operons, which are directly involved in nitrogen fixation. The protein is Nif-specific regulatory protein (nifA) of Azotobacter chroococcum mcd 1.